The primary structure comprises 465 residues: MEEEDEEARALLAGGPDEADRGAPAAPGALPALCDPSRLVHRLLVLLLMCFLGFGSYFCYDNPAALQTQVKRDMQVNTTKFMLLYAWYSWSNVVLCFFGGFLIDRVFGIRWGTIIFSCFVCIGQVVFALGGIFNAFWLMEFGRFVFGIGGESLAVAQNTYAVSWFKGKELNLVFGLQLSMARIGSTVNMNLMGWLYSKIEALLGSAGHTTLGITLMIGGVTCILSLICALALAYLDQRAERILHKEQGKTGEVIKLTDVKDFSLPLWLIFIICVCYYVAVFPFIGLGKVFFTEKFGFSSQAASAINSVVYVISAPMSPVFGLLVDKTGKNIIWVLCAVAATLVSHMMLAFTMWNPWIAMCLLGLSYSLLACALWPMVAFVVPEHQLGTAHGFMQSIQNLGLAIISIIAGMILDSRGYLFLEVFFIACVSLSLLSVVLLYLVNRAQGGNLNYSARQREEIKFSHTE.

The segment at 1–23 is disordered; it reads MEEEDEEARALLAGGPDEADRGA. Positions 11–12 match the Dileucine internalization motif motif; sequence LL. The next 12 helical transmembrane spans lie at 39 to 59, 83 to 103, 113 to 133, 135 to 155, 170 to 191, 213 to 233, 266 to 286, 304 to 324, 331 to 351, 361 to 381, 392 to 412, and 418 to 438; these read LVHR…SYFC, LLYA…GFLI, TIIF…GGIF, AFWL…SLAV, LNLV…NMNL, ITLM…LALA, LWLI…FIGL, AINS…GLLV, IIWV…LAFT, LLGL…AFVV, FMQS…GMIL, and LFLE…VVLL.

This sequence belongs to the major facilitator superfamily. As to quaternary structure, homodimer. Interacts with lysosomal protein GLMP (via lumenal domain); the interaction starts while both proteins are still in the endoplasmic reticulum and is required for stabilization of MFSD1 in lysosomes but has no direct effect on its targeting to lysosomes or transporter activity.

The protein localises to the lysosome membrane. It catalyses the reaction L-alpha-aminoacyl-L-arginine(out) = L-alpha-aminoacyl-L-arginine(in). It carries out the reaction L-arginyl-L-alpha-amino acid(out) = L-arginyl-L-alpha-amino acid(in). The enzyme catalyses L-arginyl-glycine(out) = L-arginyl-glycine(in). The catalysed reaction is L-alpha-aminoacyl-L-lysine(out) = L-alpha-aminoacyl-L-lysine(in). It catalyses the reaction L-aspartyl-L-lysine(out) = L-aspartyl-L-lysine(in). It carries out the reaction L-alanyl-L-lysine(out) = L-alanyl-L-lysine(in). The enzyme catalyses L-lysyl-L-alpha-amino acid(out) = L-lysyl-L-alpha-amino acid(in). The catalysed reaction is L-lysyl-L-alanine(out) = L-lysyl-L-alanine(in). It catalyses the reaction L-lysyl-L-lysine(out) = L-lysyl-L-lysine(in). It carries out the reaction L-lysyl-glycine(out) = L-lysyl-glycine(in). The enzyme catalyses L-alpha-aminoacyl-L-histidine(out) = L-alpha-aminoacyl-L-histidine(in). The catalysed reaction is L-histidyl-L-alpha-amino acid(out) = L-histidyl-L-alpha-amino acid(in). It catalyses the reaction L-histidyl-glycine(out) = L-histidyl-glycine(in). In terms of biological role, lysosomal dipeptide uniporter that selectively exports lysine, arginine or histidine-containing dipeptides with a net positive charge from the lysosome lumen into the cytosol. Could play a role in a specific type of protein O-glycosylation indirectly regulating macrophages migration and tissue invasion. Also essential for liver homeostasis. The polypeptide is Lysosomal dipeptide transporter MFSD1 (Pongo abelii (Sumatran orangutan)).